Consider the following 620-residue polypeptide: Acetylcholinesterase 1 (620 aa).

Residues 1-31 form the signal peptide; it reads MRYSLLFFIFLPCVITAVDLIHLHDGSPLFG. N-linked (GlcNAc...) asparagine glycosylation is present at asparagine 74. Cysteine 82 and cysteine 109 are disulfide-bonded. Catalysis depends on serine 216, which acts as the Acyl-ester intermediate. Cysteine 270 and cysteine 286 are disulfide-bonded. N-linked (GlcNAc...) asparagine glycosylation is present at asparagine 272. Active-site charge relay system residues include glutamate 346 and histidine 468. Cysteines 430 and 558 form a disulfide. N-linked (GlcNAc...) asparagine glycans are attached at residues asparagine 486 and asparagine 536.

Belongs to the type-B carboxylesterase/lipase family. Oligomer composed of disulfide-linked homodimers.

The protein localises to the synapse. It localises to the secreted. Its subcellular location is the cell membrane. It carries out the reaction acetylcholine + H2O = choline + acetate + H(+). In terms of biological role, rapidly hydrolyzes choline released into the synapse. The chain is Acetylcholinesterase 1 (ace-1) from Caenorhabditis briggsae.